We begin with the raw amino-acid sequence, 482 residues long: Bifunctional protein GlmU (482 aa).

Positions 1 to 238 (MSATSPAAVV…HREILGINNR (238 aa)) are pyrophosphorylase. Residues 12 to 15 (LAAG), lysine 26, glutamine 79, and 84 to 85 (GT) each bind UDP-N-acetyl-alpha-D-glucosamine. A Mg(2+)-binding site is contributed by aspartate 110. Residues glycine 147, glutamate 163, asparagine 178, and asparagine 236 each coordinate UDP-N-acetyl-alpha-D-glucosamine. Asparagine 236 is a binding site for Mg(2+). A linker region spans residues 239–259 (LQLAEARRLLNERLLERAMLA). Residues 260–482 (GVTVVDPAST…ASSQETDGQS (223 aa)) form an N-acetyltransferase region. Positions 341 and 359 each coordinate UDP-N-acetyl-alpha-D-glucosamine. Histidine 371 serves as the catalytic Proton acceptor. UDP-N-acetyl-alpha-D-glucosamine contacts are provided by tyrosine 374 and asparagine 385. Residues alanine 388, 394–395 (NY), serine 413, alanine 431, and arginine 448 each bind acetyl-CoA. A disordered region spans residues 458–482 (VARKRPGSAAAQAAQASSQETDGQS). Low complexity predominate over residues 465–476 (SAAAQAAQASSQ).

It in the N-terminal section; belongs to the N-acetylglucosamine-1-phosphate uridyltransferase family. In the C-terminal section; belongs to the transferase hexapeptide repeat family. Homotrimer. It depends on Mg(2+) as a cofactor.

It is found in the cytoplasm. The catalysed reaction is alpha-D-glucosamine 1-phosphate + acetyl-CoA = N-acetyl-alpha-D-glucosamine 1-phosphate + CoA + H(+). It carries out the reaction N-acetyl-alpha-D-glucosamine 1-phosphate + UTP + H(+) = UDP-N-acetyl-alpha-D-glucosamine + diphosphate. Its pathway is nucleotide-sugar biosynthesis; UDP-N-acetyl-alpha-D-glucosamine biosynthesis; N-acetyl-alpha-D-glucosamine 1-phosphate from alpha-D-glucosamine 6-phosphate (route II): step 2/2. It participates in nucleotide-sugar biosynthesis; UDP-N-acetyl-alpha-D-glucosamine biosynthesis; UDP-N-acetyl-alpha-D-glucosamine from N-acetyl-alpha-D-glucosamine 1-phosphate: step 1/1. It functions in the pathway bacterial outer membrane biogenesis; LPS lipid A biosynthesis. Its function is as follows. Catalyzes the last two sequential reactions in the de novo biosynthetic pathway for UDP-N-acetylglucosamine (UDP-GlcNAc). The C-terminal domain catalyzes the transfer of acetyl group from acetyl coenzyme A to glucosamine-1-phosphate (GlcN-1-P) to produce N-acetylglucosamine-1-phosphate (GlcNAc-1-P), which is converted into UDP-GlcNAc by the transfer of uridine 5-monophosphate (from uridine 5-triphosphate), a reaction catalyzed by the N-terminal domain. The chain is Bifunctional protein GlmU from Streptomyces griseus subsp. griseus (strain JCM 4626 / CBS 651.72 / NBRC 13350 / KCC S-0626 / ISP 5235).